Consider the following 279-residue polypeptide: ATP synthase gamma chain (279 aa).

The protein belongs to the ATPase gamma chain family. F-type ATPases have 2 components, CF(1) - the catalytic core - and CF(0) - the membrane proton channel. CF(1) has five subunits: alpha(3), beta(3), gamma(1), delta(1), epsilon(1). CF(0) has three main subunits: a, b and c.

It localises to the cell membrane. In terms of biological role, produces ATP from ADP in the presence of a proton gradient across the membrane. The gamma chain is believed to be important in regulating ATPase activity and the flow of protons through the CF(0) complex. This chain is ATP synthase gamma chain, found in Mycoplasma pneumoniae (strain ATCC 29342 / M129 / Subtype 1) (Mycoplasmoides pneumoniae).